The chain runs to 304 residues: Aspartate carbamoyltransferase catalytic subunit (304 aa).

Residues R57 and T58 each contribute to the carbamoyl phosphate site. Residue K85 coordinates L-aspartate. The carbamoyl phosphate site is built by R107, H134, and Q137. L-aspartate-binding residues include R167 and R216. Positions 260 and 261 each coordinate carbamoyl phosphate.

This sequence belongs to the aspartate/ornithine carbamoyltransferase superfamily. ATCase family. As to quaternary structure, heterododecamer (2C3:3R2) of six catalytic PyrB chains organized as two trimers (C3), and six regulatory PyrI chains organized as three dimers (R2).

It carries out the reaction carbamoyl phosphate + L-aspartate = N-carbamoyl-L-aspartate + phosphate + H(+). Its pathway is pyrimidine metabolism; UMP biosynthesis via de novo pathway; (S)-dihydroorotate from bicarbonate: step 2/3. Functionally, catalyzes the condensation of carbamoyl phosphate and aspartate to form carbamoyl aspartate and inorganic phosphate, the committed step in the de novo pyrimidine nucleotide biosynthesis pathway. The protein is Aspartate carbamoyltransferase catalytic subunit of Fusobacterium nucleatum subsp. nucleatum (strain ATCC 25586 / DSM 15643 / BCRC 10681 / CIP 101130 / JCM 8532 / KCTC 2640 / LMG 13131 / VPI 4355).